Consider the following 371-residue polypeptide: Barbiturase 2 (371 aa).

Residues 1–104 are RU A; sequence MTRPIEVRKV…TIFAYAPEGR (104 aa). Substrate contacts are provided by residues arginine 53 and 83–84; that span reads SG. Residues 112-247 are RU B; that stretch reads RVTVGYAMSE…AQIVVVGNAR (136 aa). Lysine 162 is a catalytic residue. Substrate contacts are provided by residues asparagine 194 and 230 to 231; that span reads SS. Serine 230 acts as the Nucleophile in catalysis. Residues 253–371 form an RU C region; it reads FRVGHSIMKD…PVIAIVDLEA (119 aa). Residue glutamate 303 participates in Mg(2+) binding. Residues lysine 330 and 349–350 each bind substrate; that span reads SV. Mg(2+)-binding residues include alanine 352, glutamine 355, glycine 356, proline 357, and glycine 360.

The protein belongs to the cyclic amide hydrolase (CyAH) family. As to quaternary structure, homotetramer.

It catalyses the reaction barbiturate + H2O = 3-oxo-3-ureidopropanoate. The protein operates within pyrimidine metabolism; uracil degradation via oxidative pathway; malonate and urea from uracil: step 2/3. Functionally, responsible for the hydrolysis of barbituric acid (2,4,6-trihydroxy-1,3-pyrimidine), an intermediate in the oxidative catabolism of pyrimidines. Catalyzes the hydrolytic opening of the pyrimidine ring of barbituric acid to yield ureidomalonic acid. Can also use cyanuric acid as a substrate, albeit with lower efficiency. This is Barbiturase 2 from Nocardioides sp. (strain ATCC BAA-499 / JS614).